A 704-amino-acid polypeptide reads, in one-letter code: Pentatricopeptide repeat-containing protein At1g56690, mitochondrial (704 aa).

The N-terminal 12 residues, 1-12 (MKRLKLILRRTY), are a transit peptide targeting the mitochondrion. PPR repeat units follow at residues 16–46 (TGVN…LQFK), 47–81 (AIGS…NVVS), 82–108 (WNGL…MPER), 109–143 (NVVS…NEVS), 144–170 (WTVM…MPVK), 171–205 (DVVA…NVVT), 206–232 (WTTM…MPEK), 233–267 (TEVS…PVIA), 268–294 (CNAM…MEDR), 295–329 (DNAT…GVRP), 330–364 (SFPS…QFDD), 365–395 (DVYV…FSSK), 396–430 (DIIM…GTMP), 431–465 (NKVT…FCVT), and 467–497 (TVEH…MTIK). Residues 502–577 (VWGALLGACK…FPGCSWIEVG (76 aa)) are type E motif. Residues 578 to 609 (KKVHMFTRGGIKNHPEQAMILMMLEKTDGLLR) form a type E(+) motif region. Positions 610–704 (EAGYSPDCSH…NGECSCRDYW (95 aa)) are type DYW motif.

This sequence belongs to the PPR family. PCMP-H subfamily.

The protein localises to the mitochondrion. The sequence is that of Pentatricopeptide repeat-containing protein At1g56690, mitochondrial (PCMP-H69) from Arabidopsis thaliana (Mouse-ear cress).